The sequence spans 428 residues: Ribulose bisphosphate carboxylase (428 aa).

Lysine 151 acts as the Proton acceptor in catalysis. Lysine 153 is a substrate binding site. Lysine 177, aspartate 179, and glutamate 180 together coordinate Mg(2+). Residue lysine 177 is modified to N6-carboxylysine. Histidine 270 serves as the catalytic Proton acceptor. Substrate-binding positions include arginine 271, histidine 303, 354–356 (SGG), and 376–379 (QFGG).

Belongs to the RuBisCO large chain family. Type III subfamily. Homodimer or homodecamer. In contrast to form I RuBisCO, the form III RuBisCO is composed solely of large subunits. The cofactor is Mg(2+).

The catalysed reaction is 2 (2R)-3-phosphoglycerate + 2 H(+) = D-ribulose 1,5-bisphosphate + CO2 + H2O. It carries out the reaction D-ribulose 1,5-bisphosphate + O2 = 2-phosphoglycolate + (2R)-3-phosphoglycerate + 2 H(+). Functionally, catalyzes the addition of molecular CO(2) and H(2)O to ribulose 1,5-bisphosphate (RuBP), generating two molecules of 3-phosphoglycerate (3-PGA). Functions in an archaeal AMP degradation pathway, together with AMP phosphorylase and R15P isomerase. The chain is Ribulose bisphosphate carboxylase from Methanosarcina mazei (strain ATCC BAA-159 / DSM 3647 / Goe1 / Go1 / JCM 11833 / OCM 88) (Methanosarcina frisia).